The sequence spans 450 residues: Methylenetetrahydrofolate--tRNA-(uracil-5-)-methyltransferase TrmFO (450 aa).

10 to 15 contributes to the FAD binding site; it reads GGGLAG.

Belongs to the MnmG family. TrmFO subfamily. The cofactor is FAD.

It is found in the cytoplasm. It carries out the reaction uridine(54) in tRNA + (6R)-5,10-methylene-5,6,7,8-tetrahydrofolate + NADH + H(+) = 5-methyluridine(54) in tRNA + (6S)-5,6,7,8-tetrahydrofolate + NAD(+). The enzyme catalyses uridine(54) in tRNA + (6R)-5,10-methylene-5,6,7,8-tetrahydrofolate + NADPH + H(+) = 5-methyluridine(54) in tRNA + (6S)-5,6,7,8-tetrahydrofolate + NADP(+). Functionally, catalyzes the folate-dependent formation of 5-methyl-uridine at position 54 (M-5-U54) in all tRNAs. In Anaeromyxobacter dehalogenans (strain 2CP-C), this protein is Methylenetetrahydrofolate--tRNA-(uracil-5-)-methyltransferase TrmFO.